Consider the following 250-residue polypeptide: 2,3-bisphosphoglycerate-dependent phosphoglycerate mutase (250 aa).

Substrate contacts are provided by residues 10–17 (RHGESQWN), 23–24 (TG), Arg-62, 89–92 (ERHY), Lys-100, 116–117 (RR), and 185–186 (GN). His-11 acts as the Tele-phosphohistidine intermediate in catalysis. Catalysis depends on Glu-89, which acts as the Proton donor/acceptor.

It belongs to the phosphoglycerate mutase family. BPG-dependent PGAM subfamily. In terms of assembly, homodimer.

The catalysed reaction is (2R)-2-phosphoglycerate = (2R)-3-phosphoglycerate. It functions in the pathway carbohydrate degradation; glycolysis; pyruvate from D-glyceraldehyde 3-phosphate: step 3/5. Functionally, catalyzes the interconversion of 2-phosphoglycerate and 3-phosphoglycerate. In Salmonella paratyphi A (strain ATCC 9150 / SARB42), this protein is 2,3-bisphosphoglycerate-dependent phosphoglycerate mutase.